We begin with the raw amino-acid sequence, 290 residues long: Pyridoxal kinase PdxY (290 aa).

Residues Ser-12 and 47 to 48 (TQ) each bind substrate. Residues Asp-114, Glu-151, Lys-184, and 211–214 (RPLL) each bind ATP. Asp-225 serves as a coordination point for substrate.

The protein belongs to the pyridoxine kinase family. PdxY subfamily. Homodimer. Mg(2+) serves as cofactor.

The enzyme catalyses pyridoxal + ATP = pyridoxal 5'-phosphate + ADP + H(+). It functions in the pathway cofactor metabolism; pyridoxal 5'-phosphate salvage; pyridoxal 5'-phosphate from pyridoxal: step 1/1. Its function is as follows. Pyridoxal kinase involved in the salvage pathway of pyridoxal 5'-phosphate (PLP). Catalyzes the phosphorylation of pyridoxal to PLP. This chain is Pyridoxal kinase PdxY, found in Pseudomonas putida (strain ATCC 47054 / DSM 6125 / CFBP 8728 / NCIMB 11950 / KT2440).